Reading from the N-terminus, the 316-residue chain is uncharacterized protein (316 aa).

Residue threonine 126 coordinates substrate. The Proton acceptor role is filled by tyrosine 149.

This sequence belongs to the NAD(P)-dependent epimerase/dehydratase family.

This is an uncharacterized protein from Bacillus subtilis (strain 168).